A 149-amino-acid chain; its full sequence is Large ribosomal subunit protein bL9 (149 aa).

The protein belongs to the bacterial ribosomal protein bL9 family.

Its function is as follows. Binds to the 23S rRNA. The chain is Large ribosomal subunit protein bL9 from Mannheimia succiniciproducens (strain KCTC 0769BP / MBEL55E).